A 282-amino-acid chain; its full sequence is Bis(5'-nucleosyl)-tetraphosphatase, symmetrical (282 aa).

Belongs to the Ap4A hydrolase family.

The enzyme catalyses P(1),P(4)-bis(5'-adenosyl) tetraphosphate + H2O = 2 ADP + 2 H(+). Its function is as follows. Hydrolyzes diadenosine 5',5'''-P1,P4-tetraphosphate to yield ADP. The chain is Bis(5'-nucleosyl)-tetraphosphatase, symmetrical from Enterobacter sp. (strain 638).